Here is a 121-residue protein sequence, read N- to C-terminus: Small ribosomal subunit protein uS13 (121 aa).

Positions 91–121 (HRRGLPVRGQNSKNNARTRKGPRRTVANKKK) are disordered. Over residues 106–121 (ARTRKGPRRTVANKKK) the composition is skewed to basic residues.

Belongs to the universal ribosomal protein uS13 family. Part of the 30S ribosomal subunit. Forms a loose heterodimer with protein S19. Forms two bridges to the 50S subunit in the 70S ribosome.

Located at the top of the head of the 30S subunit, it contacts several helices of the 16S rRNA. In the 70S ribosome it contacts the 23S rRNA (bridge B1a) and protein L5 of the 50S subunit (bridge B1b), connecting the 2 subunits; these bridges are implicated in subunit movement. Contacts the tRNAs in the A and P-sites. This chain is Small ribosomal subunit protein uS13, found in Bacillus cereus (strain ZK / E33L).